We begin with the raw amino-acid sequence, 355 residues long: N-acetyl-gamma-glutamyl-phosphate reductase (355 aa).

The active site involves cysteine 152.

This sequence belongs to the NAGSA dehydrogenase family. Type 1 subfamily.

The protein resides in the cytoplasm. It carries out the reaction N-acetyl-L-glutamate 5-semialdehyde + phosphate + NADP(+) = N-acetyl-L-glutamyl 5-phosphate + NADPH + H(+). Its pathway is amino-acid biosynthesis; L-arginine biosynthesis; N(2)-acetyl-L-ornithine from L-glutamate: step 3/4. Its function is as follows. Catalyzes the NADPH-dependent reduction of N-acetyl-5-glutamyl phosphate to yield N-acetyl-L-glutamate 5-semialdehyde. This chain is N-acetyl-gamma-glutamyl-phosphate reductase, found in Psychrobacter sp. (strain PRwf-1).